The chain runs to 555 residues: Protein NRT1/ PTR FAMILY 2.1 (555 aa).

The next 12 membrane-spanning stretches (helical) occupy residues 32 to 52, 68 to 88, 91 to 111, 127 to 147, 175 to 195, 205 to 225, 324 to 344, 369 to 389, 401 to 421, 437 to 457, 476 to 496, and 517 to 537; these read TLLG…VFLI, IVNG…DSFF, IPVI…LTLI, ILCQ…LALV, FFNW…TAIV, LGFG…ISGK, VLPL…QASM, VIVL…IYPI, LQQV…SAIV, VLWL…HYMA, SVTS…INLI, and WVLV…SWYF.

The protein belongs to the major facilitator superfamily. Proton-dependent oligopeptide transporter (POT/PTR) (TC 2.A.17) family. As to expression, expressed in roots.

It localises to the membrane. Transporter involved in a passive nitrate efflux. In Arabidopsis thaliana (Mouse-ear cress), this protein is Protein NRT1/ PTR FAMILY 2.1 (NPF2.1).